The sequence spans 248 residues: Adenosylcobinamide-GDP ribazoletransferase (248 aa).

A run of 8 helical transmembrane segments spans residues 24–44 (EVNL…IGAW), 47–67 (LVFT…AGLF), 70–90 (IIIT…GLFS), 106–126 (VGAN…ALFL), 134–154 (IGWL…LLFA), 165–185 (LGSI…LFVL), 186–206 (FILG…VILF), and 228–248 (AGGQ…WGLI).

The protein belongs to the CobS family. Mg(2+) serves as cofactor.

The protein localises to the cell membrane. The enzyme catalyses alpha-ribazole + adenosylcob(III)inamide-GDP = adenosylcob(III)alamin + GMP + H(+). It catalyses the reaction alpha-ribazole 5'-phosphate + adenosylcob(III)inamide-GDP = adenosylcob(III)alamin 5'-phosphate + GMP + H(+). Its pathway is cofactor biosynthesis; adenosylcobalamin biosynthesis; adenosylcobalamin from cob(II)yrinate a,c-diamide: step 7/7. Its function is as follows. Joins adenosylcobinamide-GDP and alpha-ribazole to generate adenosylcobalamin (Ado-cobalamin). Also synthesizes adenosylcobalamin 5'-phosphate from adenosylcobinamide-GDP and alpha-ribazole 5'-phosphate. The protein is Adenosylcobinamide-GDP ribazoletransferase of Listeria welshimeri serovar 6b (strain ATCC 35897 / DSM 20650 / CCUG 15529 / CIP 8149 / NCTC 11857 / SLCC 5334 / V8).